The following is a 253-amino-acid chain: GTP cyclohydrolase III (253 aa).

It belongs to the archaeal-type GTP cyclohydrolase family.

The catalysed reaction is GTP + 3 H2O = 2-amino-5-formylamino-6-(5-phospho-D-ribosylamino)pyrimidin-4(3H)-one + 2 phosphate + 2 H(+). Functionally, catalyzes the formation of 2-amino-5-formylamino-6-ribofuranosylamino-4(3H)-pyrimidinone ribonucleotide monophosphate and inorganic phosphate from GTP. Also has an independent pyrophosphate phosphohydrolase activity. This chain is GTP cyclohydrolase III, found in Natronomonas pharaonis (strain ATCC 35678 / DSM 2160 / CIP 103997 / JCM 8858 / NBRC 14720 / NCIMB 2260 / Gabara) (Halobacterium pharaonis).